The sequence spans 67 residues: Conotoxin Cl6.7 (67 aa).

Residues 1 to 24 (MKVTAVLMVAVLVLTACQLTTANT) form the signal peptide. A propeptide spanning residues 25-39 (TDYVRRIPARKSTMS) is cleaved from the precursor. 3 cysteine pairs are disulfide-bonded: C43–C58, C50–C62, and C57–C66.

It belongs to the conotoxin O1 superfamily. In terms of tissue distribution, expressed by the venom duct.

Its subcellular location is the secreted. The chain is Conotoxin Cl6.7 from Californiconus californicus (California cone).